We begin with the raw amino-acid sequence, 316 residues long: Very long chain fatty acid elongase 6 (316 aa).

Asn11 is a glycosylation site (N-linked (GlcNAc...) asparagine). Helical transmembrane passes span 30-50 (WMLE…LVIF), 64-84 (LRGP…MGAA), 117-137 (FWTW…IFIV), 142-162 (PLIF…WFSY), 167-189 (SSAR…YYAL), and 202-222 (MIIT…NVWA). N-linked (GlcNAc...) asparagine glycosylation occurs at Asn242. The helical transmembrane segment at 245–265 (IAMYSSYFVLFARFFYKAYLA) threads the bilayer.

The protein belongs to the ELO family. ELOVL6 subfamily. As to expression, detected in the CNS (central nervous system) of third larval instar (at protein level). Expressed in cyst progenitor cells (at protein level). In the adult fly, expressed in several tissues including, sperm, follicular epithelium, nurse cells and cyst cells.

It localises to the mitochondrion outer membrane. The protein localises to the endoplasmic reticulum membrane. The catalysed reaction is a very-long-chain acyl-CoA + malonyl-CoA + H(+) = a very-long-chain 3-oxoacyl-CoA + CO2 + CoA. It catalyses the reaction hexadecanoyl-CoA + malonyl-CoA + H(+) = 3-oxooctadecanoyl-CoA + CO2 + CoA. Its pathway is lipid metabolism; fatty acid biosynthesis. Functionally, catalyzes the first and rate-limiting reaction of the four reactions that constitute the long-chain fatty acids elongation cycle. This process allows the addition of 2 carbons to the chain of long- and very long-chain fatty acids (VLCFAs) per cycle. Condensing enzyme that elongates fatty acids with 12, 14 and 16 carbons with higher activity toward C16:0 acyl-CoAs. Catalyzes the synthesis of unsaturated C16 long chain fatty acids and, to a lesser extent, C18:0 and those with low desaturation degree. May participate in the production of saturated and monounsaturated VLCFAs of different chain lengths that are involved in multiple biological processes as precursors of membrane lipids and lipid mediators. In Drosophila melanogaster (Fruit fly), this protein is Very long chain fatty acid elongase 6.